A 344-amino-acid polypeptide reads, in one-letter code: Sesquiterpene synthase 9 (344 aa).

Mg(2+)-binding residues include Asp88, Asn224, Ser228, and Glu232. Residues 88-92 (DEYSD) carry the DDXXD motif motif. The NSE/DTE motif signature appears at 224–232 (NDMLSWNVE). Residues Arg313 and Tyr314 each contribute to the (2E,6E)-farnesyl diphosphate site.

This sequence belongs to the terpene synthase family. Requires Mg(2+) as cofactor.

Terpene cyclase that catalyzes the cyclization of farnesyl diphosphate (FPP) to a single major sesquiterpene scaffold whose chemical structure is still unknown. The protein is Sesquiterpene synthase 9 of Postia placenta (strain ATCC 44394 / Madison 698-R) (Brown rot fungus).